The chain runs to 360 residues: 3-dehydroquinate synthase (360 aa).

Residues 70–75 (DGEKYK), 104–108 (GVIGD), 128–129 (TT), lysine 141, and lysine 150 each bind NAD(+). Residues glutamate 183, histidine 246, and histidine 263 each contribute to the Zn(2+) site.

It belongs to the sugar phosphate cyclases superfamily. Dehydroquinate synthase family. Co(2+) is required as a cofactor. It depends on Zn(2+) as a cofactor. NAD(+) serves as cofactor.

Its subcellular location is the cytoplasm. The catalysed reaction is 7-phospho-2-dehydro-3-deoxy-D-arabino-heptonate = 3-dehydroquinate + phosphate. The protein operates within metabolic intermediate biosynthesis; chorismate biosynthesis; chorismate from D-erythrose 4-phosphate and phosphoenolpyruvate: step 2/7. Functionally, catalyzes the conversion of 3-deoxy-D-arabino-heptulosonate 7-phosphate (DAHP) to dehydroquinate (DHQ). In Acinetobacter baumannii (strain AYE), this protein is 3-dehydroquinate synthase.